We begin with the raw amino-acid sequence, 287 residues long: Uroplakin-3a (287 aa).

An N-terminal signal peptide occupies residues Met-1–Gly-18. Residues Val-19–Gly-207 are Lumenal-facing. 3 N-linked (GlcNAc...) asparagine glycosylation sites follow: Asn-74, Asn-139, and Asn-170. Residues Met-208 to Val-235 traverse the membrane as a helical segment. Residues Asp-236 to Asp-287 lie on the Cytoplasmic side of the membrane. The disordered stretch occupies residues Ala-243–Ser-274. Positions Leu-259 to Arg-271 are enriched in polar residues.

The protein belongs to the uroplakin-3 family. In terms of assembly, heterodimer with uroplakin-1B (UPK1B). As to expression, bladder epithelium.

Its subcellular location is the endoplasmic reticulum membrane. Its function is as follows. Component of the asymmetric unit membrane (AUM); a highly specialized biomembrane elaborated by terminally differentiated urothelial cells. May play an important role in AUM-cytoskeleton interaction in terminally differentiated urothelial cells. It also contributes to the formation of urothelial glycocalyx which may play an important role in preventing bacterial adherence. The sequence is that of Uroplakin-3a (UPK3A) from Bos taurus (Bovine).